Here is a 469-residue protein sequence, read N- to C-terminus: Adenosylhomocysteinase (469 aa).

The substrate site is built by threonine 63, aspartate 139, and glutamate 164. 165 to 167 is a binding site for NAD(+); sequence TTT. Lysine 194 and aspartate 198 together coordinate substrate. Residues asparagine 199, 228 to 233, glutamate 251, asparagine 300, 321 to 323, and asparagine 375 contribute to the NAD(+) site; these read GYGDVG and IGH.

It belongs to the adenosylhomocysteinase family. Requires NAD(+) as cofactor.

It localises to the cytoplasm. It catalyses the reaction S-adenosyl-L-homocysteine + H2O = L-homocysteine + adenosine. It functions in the pathway amino-acid biosynthesis; L-homocysteine biosynthesis; L-homocysteine from S-adenosyl-L-homocysteine: step 1/1. May play a key role in the regulation of the intracellular concentration of adenosylhomocysteine. This is Adenosylhomocysteinase from Pseudomonas aeruginosa (strain LESB58).